A 141-amino-acid chain; its full sequence is Nucleoside diphosphate kinase (141 aa).

Lys9, Phe57, Arg85, Thr91, Arg102, and Asn112 together coordinate ATP. His115 functions as the Pros-phosphohistidine intermediate in the catalytic mechanism.

Belongs to the NDK family. Homotetramer. It depends on Mg(2+) as a cofactor.

Its subcellular location is the cytoplasm. It carries out the reaction a 2'-deoxyribonucleoside 5'-diphosphate + ATP = a 2'-deoxyribonucleoside 5'-triphosphate + ADP. The enzyme catalyses a ribonucleoside 5'-diphosphate + ATP = a ribonucleoside 5'-triphosphate + ADP. Major role in the synthesis of nucleoside triphosphates other than ATP. The ATP gamma phosphate is transferred to the NDP beta phosphate via a ping-pong mechanism, using a phosphorylated active-site intermediate. The protein is Nucleoside diphosphate kinase of Chlamydia abortus (strain DSM 27085 / S26/3) (Chlamydophila abortus).